Consider the following 187-residue polypeptide: Bis(5'-nucleosyl)-tetraphosphatase, symmetrical (187 aa).

Residues 18 to 132 (RYQHTIGVME…IFLADYIEPN (115 aa)) enclose the HD domain. Histidine 21 is an ADP binding site. Residues histidine 21, histidine 50, and aspartate 51 each contribute to the Fe cation site. Residues 51–54 (DYAK), histidine 83, 109–110 (HT), aspartate 127, arginine 133, and 170–175 (PIYPDT) contribute to the ADP site. Residue aspartate 127 participates in Fe cation binding.

Belongs to the Ap4A hydrolase YqeK family. In terms of assembly, homodimer.

It catalyses the reaction P(1),P(4)-bis(5'-adenosyl) tetraphosphate + H2O = 2 ADP + 2 H(+). Functionally, hydrolyzes diadenosine 5',5'''-P1,P4-tetraphosphate (Ap4A) to yield ADP. In Halalkalibacterium halodurans (strain ATCC BAA-125 / DSM 18197 / FERM 7344 / JCM 9153 / C-125) (Bacillus halodurans), this protein is Bis(5'-nucleosyl)-tetraphosphatase, symmetrical.